A 267-amino-acid chain; its full sequence is Electron transfer flavoprotein subunit beta (267 aa).

Belongs to the ETF beta-subunit/FixA family. As to quaternary structure, heterodimer of an alpha and a beta subunit.

Functionally, participates in the electron transfer process during N,N-dimethylglycine (DMG) degradation to sarcosine. In Chromohalobacter salexigens (strain ATCC BAA-138 / DSM 3043 / CIP 106854 / NCIMB 13768 / 1H11), this protein is Electron transfer flavoprotein subunit beta.